Consider the following 92-residue polypeptide: MSEEKKVVLTREYVVNLRRAYEVSRTKRAKYAVGLIRRFVARHLKVESKNVRIGQALNEVLWMRSIEKPPRKVRVVVEKLSDGTVKVDLKNV.

It belongs to the eukaryotic ribosomal protein eL31 family.

The chain is Large ribosomal subunit protein eL31 from Pyrobaculum arsenaticum (strain DSM 13514 / JCM 11321 / PZ6).